A 316-amino-acid polypeptide reads, in one-letter code: Protease HtpX homolog (316 aa).

The helical transmembrane segment at 16 to 36 threads the bilayer; the sequence is LFMALGFTIGGTGGAMIALVV. Histidine 130 contributes to the Zn(2+) binding site. Glutamate 131 is a catalytic residue. A Zn(2+)-binding site is contributed by histidine 134. A run of 2 helical transmembrane segments spans residues 145 to 165 and 174 to 194; these read MTAT…FFGA and LATI…QMAI. Glutamate 199 provides a ligand contact to Zn(2+). The disordered stretch occupies residues 285–316; the sequence is PNFAALSERRGSVSSVPRTRRRSSALDPNGRG.

The protein belongs to the peptidase M48B family. Zn(2+) serves as cofactor.

It localises to the cell inner membrane. The sequence is that of Protease HtpX homolog from Rhizorhabdus wittichii (strain DSM 6014 / CCUG 31198 / JCM 15750 / NBRC 105917 / EY 4224 / RW1) (Sphingomonas wittichii).